The sequence spans 97 residues: Aspartyl/glutamyl-tRNA(Asn/Gln) amidotransferase subunit C (97 aa).

Belongs to the GatC family. As to quaternary structure, heterotrimer of A, B and C subunits.

The enzyme catalyses L-glutamyl-tRNA(Gln) + L-glutamine + ATP + H2O = L-glutaminyl-tRNA(Gln) + L-glutamate + ADP + phosphate + H(+). It catalyses the reaction L-aspartyl-tRNA(Asn) + L-glutamine + ATP + H2O = L-asparaginyl-tRNA(Asn) + L-glutamate + ADP + phosphate + 2 H(+). Its function is as follows. Allows the formation of correctly charged Asn-tRNA(Asn) or Gln-tRNA(Gln) through the transamidation of misacylated Asp-tRNA(Asn) or Glu-tRNA(Gln) in organisms which lack either or both of asparaginyl-tRNA or glutaminyl-tRNA synthetases. The reaction takes place in the presence of glutamine and ATP through an activated phospho-Asp-tRNA(Asn) or phospho-Glu-tRNA(Gln). The chain is Aspartyl/glutamyl-tRNA(Asn/Gln) amidotransferase subunit C from Clostridium botulinum (strain Eklund 17B / Type B).